Here is a 275-residue protein sequence, read N- to C-terminus: Ammonia transport outward protein 3 (275 aa).

The Extracellular portion of the chain corresponds to 1-84 (MTSSASSPQD…NCAKYTPHQF (84 aa)). Position 4 is a phosphoserine (Ser-4). A helical transmembrane segment spans residues 85–105 (ANPVPLGLASFSLSCLVLSLI). Over 106–120 (NANVRGVTDGKWALS) the chain is Cytoplasmic. The helical transmembrane segment at 121–141 (LFMFFGGAIELFAGLLCFVIG) threads the bilayer. Residues 142-181 (DTYAMTVFSSFGGFWICYGYGLTDTDNLVSGYTDPTMLNN) are Extracellular-facing. A helical membrane pass occupies residues 182-202 (VIGFFLAGWTVFTFLMLMCTL). Topologically, residues 203 to 207 (KSTWG) are cytoplasmic. The helical transmembrane segment at 208–228 (LFLLLTFLDLTFLLLCIGTFI) threads the bilayer. Over 229–236 (DNNNLKMA) the chain is Extracellular. A helical membrane pass occupies residues 237–257 (GGYFGILSSCCGWYSLYCSVV). Topologically, residues 258–275 (SPSNSYLAFRAHTMPNAP) are cytoplasmic.

It belongs to the acetate uptake transporter (AceTr) (TC 2.A.96) family.

Its subcellular location is the cell membrane. Transporter protein required for ammonia export. Induced in rho(0) cells, probably to eliminate the excess ammonia that arises because of a potential defect in ammonia assimilation in those cells. In Saccharomyces cerevisiae (strain ATCC 204508 / S288c) (Baker's yeast), this protein is Ammonia transport outward protein 3 (ATO3).